The chain runs to 465 residues: Ribulose bisphosphate carboxylase large chain (465 aa).

K4 is subject to N6,N6,N6-trimethyllysine. Residues N113 and T163 each coordinate substrate. K165 functions as the Proton acceptor in the catalytic mechanism. A substrate-binding site is contributed by K167. Positions 191, 193, and 194 each coordinate Mg(2+). K191 is subject to N6-carboxylysine. The active-site Proton acceptor is H284. Substrate is bound by residues R285, H317, and S369.

It belongs to the RuBisCO large chain family. Type I subfamily. In terms of assembly, heterohexadecamer of 8 large chains and 8 small chains; disulfide-linked. The disulfide link is formed within the large subunit homodimers. Mg(2+) is required as a cofactor. In terms of processing, the disulfide bond which can form in the large chain dimeric partners within the hexadecamer appears to be associated with oxidative stress and protein turnover.

Its subcellular location is the plastid. The protein resides in the chloroplast. The enzyme catalyses 2 (2R)-3-phosphoglycerate + 2 H(+) = D-ribulose 1,5-bisphosphate + CO2 + H2O. It carries out the reaction D-ribulose 1,5-bisphosphate + O2 = 2-phosphoglycolate + (2R)-3-phosphoglycerate + 2 H(+). RuBisCO catalyzes two reactions: the carboxylation of D-ribulose 1,5-bisphosphate, the primary event in carbon dioxide fixation, as well as the oxidative fragmentation of the pentose substrate in the photorespiration process. Both reactions occur simultaneously and in competition at the same active site. The chain is Ribulose bisphosphate carboxylase large chain from Dillenia indica (Elephant apple).